The sequence spans 65 residues: Large ribosomal subunit protein bL35 (65 aa).

The interval Lys23–Leu44 is disordered.

Belongs to the bacterial ribosomal protein bL35 family.

The polypeptide is Large ribosomal subunit protein bL35 (Lachnoclostridium phytofermentans (strain ATCC 700394 / DSM 18823 / ISDg) (Clostridium phytofermentans)).